The chain runs to 318 residues: Acetyl-coenzyme A carboxylase carboxyl transferase subunit alpha (318 aa).

One can recognise a CoA carboxyltransferase C-terminal domain in the interval 43 to 293; it reads RSQTALRDLY…GDGIAAALKS (251 aa).

It belongs to the AccA family. In terms of assembly, acetyl-CoA carboxylase is a heterohexamer composed of biotin carboxyl carrier protein (AccB), biotin carboxylase (AccC) and two subunits each of ACCase subunit alpha (AccA) and ACCase subunit beta (AccD).

It is found in the cytoplasm. It catalyses the reaction N(6)-carboxybiotinyl-L-lysyl-[protein] + acetyl-CoA = N(6)-biotinyl-L-lysyl-[protein] + malonyl-CoA. It participates in lipid metabolism; malonyl-CoA biosynthesis; malonyl-CoA from acetyl-CoA: step 1/1. In terms of biological role, component of the acetyl coenzyme A carboxylase (ACC) complex. First, biotin carboxylase catalyzes the carboxylation of biotin on its carrier protein (BCCP) and then the CO(2) group is transferred by the carboxyltransferase to acetyl-CoA to form malonyl-CoA. The protein is Acetyl-coenzyme A carboxylase carboxyl transferase subunit alpha of Bartonella bacilliformis (strain ATCC 35685 / KC583 / Herrer 020/F12,63).